The following is a 418-amino-acid chain: Tektin-1 (418 aa).

4 coiled-coil regions span residues 20-107 (NKSQ…SYKE), 134-177 (QELQ…DLRD), 266-308 (NGLK…QQEG), and 332-383 (IAQY…ENTI).

Belongs to the tektin family. Microtubule inner protein component of sperm flagellar doublet microtubules. In terms of processing, ubiquitinated, leading to its degradation. Deubiquitinated by USP16, promoting its stability.

The protein localises to the cytoplasm. The protein resides in the cytoskeleton. It localises to the cilium axoneme. It is found in the flagellum axoneme. Functionally, microtubule inner protein (MIP) part of the dynein-decorated doublet microtubules (DMTs) in cilia and flagellar axoneme. Forms filamentous polymers in the walls of ciliary and flagellar microtubules. The chain is Tektin-1 (Tekt1) from Mus musculus (Mouse).